We begin with the raw amino-acid sequence, 401 residues long: Exodeoxyribonuclease 7 large subunit (401 aa).

Belongs to the XseA family. As to quaternary structure, heterooligomer composed of large and small subunits.

It localises to the cytoplasm. The enzyme catalyses Exonucleolytic cleavage in either 5'- to 3'- or 3'- to 5'-direction to yield nucleoside 5'-phosphates.. Its function is as follows. Bidirectionally degrades single-stranded DNA into large acid-insoluble oligonucleotides, which are then degraded further into small acid-soluble oligonucleotides. In Clostridium botulinum (strain Loch Maree / Type A3), this protein is Exodeoxyribonuclease 7 large subunit.